The chain runs to 1416 residues: MTELLQWARHHWRRLSHGRAQGEDERPYNYASLLACGGKSSRTPRPAGKHRVVIPHLQCFKDEYERFSGTYVNNRIRTTKYTLLNFVPRNLFEQFHRAANLYFLFLVVLNWVPLVEAFQKEITMLPLVVVLTIIAIKDGLEDYRKYKIDKQINNLITKVYSRKEKKYIDCCWKNVTVGDFIRLSCNEIIPADMVLLFSTDPDGICHIETSGLDGESNLKQRQVVRGYTEQDSEVDPEKFSSRIECESPNNDLSRFRGFLEHANKERVGLSKENLLLRGCTIRNTEAVVGIVVYAGHETKAMLNNSGPRYKRSKLERRANTDVLWCVLLLIVMCLTGALGHGIWLSRYENMLFFNIPEPDGRVISPVLTGFYVFWTMIILLQVLIPISLYVSIEIVKLGQIYFIQSDVDFYNEKMDSTIQCRALNITEDLGQIQYLFSDKTGTLTENKMVFRRCSVAGFDYCHEENAKRLESYQEAVSEEEECTDTLGGSLSNMARPRAQGCRTVPSGPLGKPSAQLSGSTSAVGNGEGSGEVPHSRQAAFSSPMETDVVPDTRLLDKFSQLTPQLLTGLDGTAQSSPLETLYIMDFFIALAICNTVVVSAPNQPRQKIGLSSLGGMPIKSLEEIKNIFQKLSVRRSSSPSLASGKDSSSGTPCAFVSRISFFSRPKLSPPMEDESSQMDEIPQASNSACCTETEAQNRAVGLSVSSAEALSGPPPSASNLCYEAESPDEAALVYAARAYRCTLQSRTPEQVMVDFAALGSLTFQLLHILPFDSVRKRMSVVVRHPLSKQVVVYTKGADSVIMELLSVAASDGTNPEQQMIIRERTQRHLDEYAKRGLRTLCVAKKVMSDTEYAEWLRNHFLAETSIDNREELLVESAMRLENKLTLLGATGIEDRLQEGVPESIEALHQAGIKIWMLTGDKQETAVNIAYACKLLEPDDKLFILNTQSQDACGMLMSAILEELQKRAQVSPELASSRKNFPQPSDAQGQGRAGLVITGKTLEFALQESLQRQFLELTAWCQAVICCRATPLQKSEVVKLVRNHHHVLTLPIGDGANDVSMIQVADIGIGVSGQEGMQAVMASDFAISQFRHLSKLLLVHGHWCYTRLSNMILYFFYKNVAYVNLLFWYQFFCGFSGTSMTDYWVLIFFNLLFTSVPPIIYGVLEKDVSAETLLQLPELYRSGQRSEEYLPLTFWITLLDAFYQSLVCFFVPYFTYQGSDIDIFTFGNPLNTAALFIILLHLVIESKSLTWIHMLVTVGSILSYFFFALAFGALCVTCNPPSNPYGIMRKHMLDPVFYLVCVLTTFVALLPRFLYRVLQGSVFPSPVLRAKYFDRLPPEERAEALKRWRGTAKVNHVASKHASQSAAMSGRPTPGSSAVLAMKSATVSTVEQSTRETALDRGCSEPGASKMTGSSAS.

Over 1-97 (MTELLQWARH…PRNLFEQFHR (97 aa)) the chain is Cytoplasmic. Residues 98-118 (AANLYFLFLVVLNWVPLVEAF) traverse the membrane as a helical segment. The Exoplasmic loop segment spans residues 119–120 (QK). The helical transmembrane segment at 121–141 (EITMLPLVVVLTIIAIKDGLE) threads the bilayer. At 142 to 321 (DYRKYKIDKQ…SKLERRANTD (180 aa)) the chain is on the cytoplasmic side. The helical transmembrane segment at 322-342 (VLWCVLLLIVMCLTGALGHGI) threads the bilayer. At 343 to 365 (WLSRYENMLFFNIPEPDGRVISP) the chain is on the exoplasmic loop side. Residues 366–386 (VLTGFYVFWTMIILLQVLIPI) form a helical membrane-spanning segment. The Cytoplasmic portion of the chain corresponds to 387-1110 (SLYVSIEIVK…HWCYTRLSNM (724 aa)). Catalysis depends on Asp-438, which acts as the 4-aspartylphosphate intermediate. Residues Asp-438, Lys-439, and Thr-440 each coordinate ATP. Mg(2+) is bound at residue Asp-438. Thr-440 provides a ligand contact to Mg(2+). The interval 498-544 (AQGCRTVPSGPLGKPSAQLSGSTSAVGNGEGSGEVPHSRQAAFSSPM) is disordered. Residues 514–523 (AQLSGSTSAV) show a composition bias toward polar residues. Residues Glu-729, Phe-771, Lys-795, Arg-838, Thr-918, Gly-919, and Asp-920 each coordinate ATP. The disordered stretch occupies residues 971 to 990 (PELASSRKNFPQPSDAQGQG). The segment covering 976–987 (SRKNFPQPSDAQ) has biased composition (polar residues). ATP contacts are provided by residues 993 to 1000 (GLVITGKT), Arg-1027, and Lys-1033. Asp-1053 contacts Mg(2+). The ATP site is built by Asn-1056 and Asp-1057. Asp-1057 contacts Mg(2+). A helical membrane pass occupies residues 1111 to 1131 (ILYFFYKNVAYVNLLFWYQFF). Residues 1132 to 1142 (CGFSGTSMTDY) lie on the Exoplasmic loop side of the membrane. The helical transmembrane segment at 1143 to 1163 (WVLIFFNLLFTSVPPIIYGVL) threads the bilayer. The Cytoplasmic portion of the chain corresponds to 1164–1192 (EKDVSAETLLQLPELYRSGQRSEEYLPLT). A helical transmembrane segment spans residues 1193 to 1213 (FWITLLDAFYQSLVCFFVPYF). The Exoplasmic loop segment spans residues 1214–1221 (TYQGSDID). The helical transmembrane segment at 1222 to 1242 (IFTFGNPLNTAALFIILLHLV) threads the bilayer. The Cytoplasmic portion of the chain corresponds to 1243-1252 (IESKSLTWIH). A helical membrane pass occupies residues 1253-1273 (MLVTVGSILSYFFFALAFGAL). The Exoplasmic loop segment spans residues 1274–1289 (CVTCNPPSNPYGIMRK). A helical transmembrane segment spans residues 1290 to 1310 (HMLDPVFYLVCVLTTFVALLP). Over 1311-1416 (RFLYRVLQGS…ASKMTGSSAS (106 aa)) the chain is Cytoplasmic. A disordered region spans residues 1358–1416 (SKHASQSAAMSGRPTPGSSAVLAMKSATVSTVEQSTRETALDRGCSEPGASKMTGSSAS). 1361–1368 (ASQSAAMS) contributes to the ATP binding site. Positions 1392 to 1402 (STRETALDRGC) are enriched in basic and acidic residues.

It belongs to the cation transport ATPase (P-type) (TC 3.A.3) family. Type IV subfamily. In terms of assembly, component of a P4-ATPase flippase complex which consists of a catalytic alpha subunit ATP10A and an accessory beta subunit TMEM30A. The cofactor is Mg(2+). Post-translationally, autophosphorylated at the conserved aspartate of the P-type ATPase signature sequence. Expressed at low amounts in liver, brain, testes, and kidney (at protein level). Expressed in placenta.

The protein resides in the cell membrane. It localises to the endoplasmic reticulum membrane. The catalysed reaction is ATP + H2O + phospholipidSide 1 = ADP + phosphate + phospholipidSide 2.. The enzyme catalyses a beta-D-glucosyl-(1&lt;-&gt;1')-N-acylsphing-4-enine(out) + ATP + H2O = a beta-D-glucosyl-(1&lt;-&gt;1')-N-acylsphing-4-enine(in) + ADP + phosphate + H(+). Functionally, catalytic component of a P4-ATPase flippase complex, which catalyzes the hydrolysis of ATP coupled to the transport of glucosylceramide (GlcCer) from the outer to the inner leaflet of the plasma membrane. The sequence is that of Phospholipid-transporting ATPase VD (Atp10d) from Mus musculus (Mouse).